The primary structure comprises 43 residues: uncharacterized protein (43 aa).

The first 17 residues, 1-17 (MYRRLLLNLFCMVFLQA), serve as a signal peptide directing secretion.

This is an uncharacterized protein from Helicobacter pylori (strain J99 / ATCC 700824) (Campylobacter pylori J99).